The chain runs to 457 residues: MQKYMLEARQLLALAIPVIIAQVAQTSMGFVDTVMAGGYSATDMAAVAIGTSIWLPAILFGHGLLLALTPVIAQLNGSGRRERIAHQVRQGFWLAGFVSILIMVVLWNAGYIIRSMDNIDPALADKAVGYLRALLWGAPGYLFFQVARNQCEGLAKTKPGMVMGFIGLLVNIPVNYIFIYGHFGMPELGGVGCGVATAAVYWVMFFSMISYVKRARSMRDIRNEQRFSKPDMDVLKRLAQLGLPIALALFFEVTLFAVVALLVSPLGIVDVAGHQIALNFSSLMFVLPMSLAAAVTIRVGYRLGQGSTLDAQTAARTGLGVGVCMAFCTALFTVTLREQIALLYNDNPEVITLASQLMLLAAIYQLSDSIQVIGSGILRGYKDTRSIFFITFTAYWVLGLPTGYILALTDLVVDRMGPAGFWMGFIIGLTSAAILMMLRMRFLQRQPSSVILQRAAR.

12 consecutive transmembrane segments (helical) span residues 11–31, 53–73, 93–113, 127–147, 160–180, 189–209, 243–263, 276–296, 314–334, 357–377, 387–407, and 418–438; these read LLAL…MGFV, IWLP…PVIA, WLAG…GYII, AVGY…FQVA, GMVM…IFIY, GGVG…FSMI, LPIA…ALLV, IALN…AAVT, AART…LFTV, LMLL…GSGI, IFFI…YILA, and PAGF…LMML.

It belongs to the multi antimicrobial extrusion (MATE) (TC 2.A.66.1) family. MdtK subfamily.

Its subcellular location is the cell inner membrane. In terms of biological role, multidrug efflux pump that functions probably as a Na(+)/drug antiporter. The protein is Multidrug resistance protein MdtK of Enterobacter sp. (strain 638).